Consider the following 1185-residue polypeptide: Adhesion G-protein coupled receptor G6 (1185 aa).

The first 32 residues, 1-32, serve as a signal peptide directing secretion; the sequence is MISFISGRWWRWKFQNTLAVFLLLICLSTSVA. Residues 33-849 are Extracellular-facing; the sequence is QSCQSSTSCN…AELIDEKNNR (817 aa). A disulfide bridge connects residues Cys-41 and Cys-67. A CUB domain is found at 41–149; that stretch reads CNVVLTDSQG…KGFHISYKQV (109 aa). A mediates interaction with type IV collagen region spans residues 41-354; sequence CNVVLTDSQG…SSTQTDSTLS (314 aa). The segment at 41-839 is inhibits receptor signaling in absence of type IV collagen; the sequence is CNVVLTDSQG…FGILMDVSRA (799 aa). A glycan (N-linked (GlcNAc...) asparagine) is linked at Asn-68. Residues Glu-89 and Asp-97 each contribute to the Ca(2+) site. Cys-94 and Cys-111 are joined by a disulfide. A glycan (N-linked (GlcNAc...) asparagine) is linked at Asn-121. Asp-134, Ser-136, and Val-137 together coordinate Ca(2+). The region spanning 154–355 is the Pentraxin (PTX) domain; sequence RNQKVTMPKS…STQTDSTLSC (202 aa). Cystine bridges form between Cys-185–Cys-248, Cys-229–Cys-271, and Cys-369–Cys-375. 14 N-linked (GlcNAc...) asparagine glycosylation sites follow: Asn-395, Asn-429, Asn-470, Asn-539, Asn-550, Asn-562, Asn-565, Asn-613, Asn-680, Asn-691, Asn-719, Asn-763, Asn-799, and Asn-818. Intrachain disulfides connect Cys-508/Cys-544 and Cys-532/Cys-563. The region spanning 658 to 840 is the GAIN-B domain; it reads PSLTISSKNL…GILMDVSRAA (183 aa). 2 cysteine pairs are disulfide-bonded: Cys-790–Cys-822 and Cys-809–Cys-824. Residues 790–840 are GPS; that stretch reads CVFWDFNLQNYSGGCNSDGCKVGSDSNSNRTVCLCNHLTHFGILMDVSRAA. The segment at 829-837 is stachel; that stretch reads HFGILMDVS. Residues 850-870 form a helical membrane-spanning segment; the sequence is VLTFITYIGCGISAIFSAATL. At 871–886 the chain is on the cytoplasmic side; the sequence is LTYIAFEKLRRDYPSK. The chain crosses the membrane as a helical span at residues 887–907; the sequence is ILMNLSTSLLFLNMVFLLDGW. At 908 to 915 the chain is on the extracellular side; the sequence is LASYEIKE. A helical membrane pass occupies residues 916-936; sequence LCVTVAVFLHFFLLTSFTWMG. Topologically, residues 937–957 are cytoplasmic; sequence LESIHMYIALVKVFNTYIRRY. Residues 958-978 traverse the membrane as a helical segment; that stretch reads ILKFCIVGWGVPAAIVGIVLA. Residues 979–1013 lie on the Extracellular side of the membrane; the sequence is VSKDSYGKNYYGKGKDGQGTSEFCWILNPVVFYVT. A helical membrane pass occupies residues 1014 to 1034; sequence CVAYFSIIFLMNVAMFIVVMI. The Cytoplasmic segment spans residues 1035–1057; that stretch reads QICGRNGKRSNRTLREDILRNLR. A helical membrane pass occupies residues 1058 to 1080; the sequence is SVVSLTFLLGMTWGFAFFAWGPV. Over 1081–1083 the chain is Extracellular; it reads SLA. The chain crosses the membrane as a helical span at residues 1084–1106; it reads FMYLFTIFNSLQGLFIFVFHCAL. 17alpha-hydroxyprogesterone is bound at residue Asn-1092. Residues 1107–1185 are Cytoplasmic-facing; sequence KENVQKQWRR…RHSNADSTLQ (79 aa). The disordered stretch occupies residues 1138-1160; that stretch reads NTKKVSSDNLGKSLSSSSFGSTT. Over residues 1144-1158 the composition is skewed to low complexity; the sequence is SDNLGKSLSSSSFGS.

Belongs to the G-protein coupled receptor 2 family. Adhesion G-protein coupled receptor (ADGR) subfamily. Post-translationally, autoproteolytically processed at the GPS region of the GAIN-B domain; this cleavage modulates receptor activity. As to expression, expressed in Schwann cells of the posterior lateral line nerve and in brain.

It is found in the cell membrane. Forms a heterodimer of 2 chains generated by proteolytic processing that remain associated through non-covalent interactions mediated by the GAIN-B domain. In the inactivated receptor, the Stachel sequence (also named stalk) is embedded in the GAIN-B domain, where it adopts a beta-strand conformation. On activation, the Stachel moves into the 7 transmembrane region and adopts a twisted hook-shaped configuration that forms contacts within the receptor, leading to coupling of a G-alpha protein, which activates signaling. The cleaved GAIN-B and N-terminal domains can then dissociate from the rest of the receptor. Adhesion G-protein coupled receptor (aGPCR) for steroid hormones, such as progesterone and 17alpha-hydroxyprogesterone (17OHP). Ligand binding causes a conformation change that triggers signaling via guanine nucleotide-binding proteins (G proteins) and modulates the activity of downstream effectors, such as adenylate cyclase. Adgrg6 is coupled to G(i) G alpha proteins and mediates inhibition of adenylate cyclase. Also able to couple to G(q) G proteins. Involved in myelination of the peripheral nervous system: required for differentiation of promyelinating Schwann cells and for normal myelination of axons. G-protein coupled receptor activity can also be activated by type IV collagen, a major constituent of the basement membrane. Also plays a role inner ear development. This chain is Adhesion G-protein coupled receptor G6 (adgrg6), found in Danio rerio (Zebrafish).